The following is a 107-amino-acid chain: Flagellar transcriptional regulator FlhD (107 aa).

This sequence belongs to the FlhD family. In terms of assembly, homodimer; disulfide-linked. Forms a heterohexamer composed of two FlhC and four FlhD subunits. Each FlhC binds a FlhD dimer, forming a heterotrimer, and a hexamer assembles by dimerization of two heterotrimers.

It is found in the cytoplasm. Functionally, functions in complex with FlhC as a master transcriptional regulator that regulates transcription of several flagellar and non-flagellar operons by binding to their promoter region. Activates expression of class 2 flagellar genes, including fliA, which is a flagellum-specific sigma factor that turns on the class 3 genes. Also regulates genes whose products function in a variety of physiological pathways. The protein is Flagellar transcriptional regulator FlhD of Bordetella pertussis (strain Tohama I / ATCC BAA-589 / NCTC 13251).